An 802-amino-acid chain; its full sequence is Bifunctional purine biosynthetic protein ADE5,7 (802 aa).

Residues Met-1–Ile-450 form a GARS region. The ATP-grasp domain maps to Lys-114–Glu-330. Gln-141–Ser-203 lines the ATP pocket. 2 residues coordinate Mg(2+): Glu-298 and Asn-300. The tract at residues Thr-451 to Tyr-802 is AIRS. Residues Ser-455 and Ser-458 each carry the phosphoserine modification.

This sequence in the N-terminal section; belongs to the GARS family. In the C-terminal section; belongs to the AIR synthase family. Mg(2+) serves as cofactor. Mn(2+) is required as a cofactor.

The protein resides in the cytoplasm. The enzyme catalyses 5-phospho-beta-D-ribosylamine + glycine + ATP = N(1)-(5-phospho-beta-D-ribosyl)glycinamide + ADP + phosphate + H(+). It catalyses the reaction 2-formamido-N(1)-(5-O-phospho-beta-D-ribosyl)acetamidine + ATP = 5-amino-1-(5-phospho-beta-D-ribosyl)imidazole + ADP + phosphate + H(+). Its pathway is purine metabolism; IMP biosynthesis via de novo pathway; 5-amino-1-(5-phospho-D-ribosyl)imidazole from N(2)-formyl-N(1)-(5-phospho-D-ribosyl)glycinamide: step 2/2. It functions in the pathway purine metabolism; IMP biosynthesis via de novo pathway; N(1)-(5-phospho-D-ribosyl)glycinamide from 5-phospho-alpha-D-ribose 1-diphosphate: step 2/2. Functionally, catalyzes the second and fifth step in the 'de novo' purine biosynthesis pathway; contains phosphoribosylamine--glycine ligase (GARS) and phosphoribosylformylglycinamidine cyclo-ligase (AIRS) activities. This chain is Bifunctional purine biosynthetic protein ADE5,7, found in Saccharomyces cerevisiae (strain ATCC 204508 / S288c) (Baker's yeast).